We begin with the raw amino-acid sequence, 490 residues long: Cytochrome P450 2C8 (490 aa).

Substrate-binding residues include S100, N204, and R241. Residue S100 is modified to Phosphoserine. C435 lines the heme pocket.

The protein belongs to the cytochrome P450 family. The cofactor is heme.

The protein resides in the endoplasmic reticulum membrane. Its subcellular location is the microsome membrane. The catalysed reaction is an organic molecule + reduced [NADPH--hemoprotein reductase] + O2 = an alcohol + oxidized [NADPH--hemoprotein reductase] + H2O + H(+). The enzyme catalyses (5Z,8Z,11Z,14Z)-eicosatetraenoate + reduced [NADPH--hemoprotein reductase] + O2 = (11R,12S)-epoxy-(5Z,8Z,14Z)-eicosatrienoate + oxidized [NADPH--hemoprotein reductase] + H2O + H(+). It carries out the reaction (5Z,8Z,11Z,14Z)-eicosatetraenoate + reduced [NADPH--hemoprotein reductase] + O2 = (11S,12R)-epoxy-(5Z,8Z,14Z)-eicosatrienoate + oxidized [NADPH--hemoprotein reductase] + H2O + H(+). It catalyses the reaction (5Z,8Z,11Z,14Z)-eicosatetraenoate + reduced [NADPH--hemoprotein reductase] + O2 = (14R,15S)-epoxy-(5Z,8Z,11Z)-eicosatrienoate + oxidized [NADPH--hemoprotein reductase] + H2O + H(+). The catalysed reaction is (5Z,8Z,11Z,14Z)-eicosatetraenoate + reduced [NADPH--hemoprotein reductase] + O2 = (14S,15R)-epoxy-(5Z,8Z,11Z)-eicosatrienoate + oxidized [NADPH--hemoprotein reductase] + H2O + H(+). The enzyme catalyses (5Z,8Z,11Z,14Z,17Z)-eicosapentaenoate + reduced [NADPH--hemoprotein reductase] + O2 = 11,12-epoxy-(5Z,8Z,14Z,17Z)-eicosatetraenoate + oxidized [NADPH--hemoprotein reductase] + H2O + H(+). It carries out the reaction (5Z,8Z,11Z,14Z,17Z)-eicosapentaenoate + reduced [NADPH--hemoprotein reductase] + O2 = 14,15-epoxy-(5Z,8Z,11Z,17Z)-eicosatetraenoate + oxidized [NADPH--hemoprotein reductase] + H2O + H(+). It catalyses the reaction (5Z,8Z,11Z,14Z,17Z)-eicosapentaenoate + reduced [NADPH--hemoprotein reductase] + O2 = (17R,18S)-epoxy-(5Z,8Z,11Z,14Z)-eicosatetraenoate + oxidized [NADPH--hemoprotein reductase] + H2O + H(+). The catalysed reaction is (5Z,8Z,11Z,14Z,17Z)-eicosapentaenoate + reduced [NADPH--hemoprotein reductase] + O2 = (17S,18R)-epoxy-(5Z,8Z,11Z,14Z)-eicosatetraenoate + oxidized [NADPH--hemoprotein reductase] + H2O + H(+). The enzyme catalyses (4Z,7Z,10Z,13Z,16Z,19Z)-docosahexaenoate + reduced [NADPH--hemoprotein reductase] + O2 = (19R,20S)-epoxy-(4Z,7Z,10Z,13Z,16Z)-docosapentaenoate + oxidized [NADPH--hemoprotein reductase] + H2O + H(+). It carries out the reaction (4Z,7Z,10Z,13Z,16Z,19Z)-docosahexaenoate + reduced [NADPH--hemoprotein reductase] + O2 = (19S,20R)-epoxy-(4Z,7Z,10Z,13Z,16Z)-docosapentaenoate + oxidized [NADPH--hemoprotein reductase] + H2O + H(+). It catalyses the reaction all-trans-retinoate + reduced [NADPH--hemoprotein reductase] + O2 = all-trans-4-hydroxyretinoate + oxidized [NADPH--hemoprotein reductase] + H2O + H(+). The catalysed reaction is 17beta-estradiol + reduced [NADPH--hemoprotein reductase] + O2 = 16alpha,17beta-estriol + oxidized [NADPH--hemoprotein reductase] + H2O + H(+). The enzyme catalyses estrone + reduced [NADPH--hemoprotein reductase] + O2 = 16alpha-hydroxyestrone + oxidized [NADPH--hemoprotein reductase] + H2O + H(+). The protein operates within steroid metabolism. It participates in lipid metabolism; arachidonate metabolism. Its pathway is cofactor metabolism; retinol metabolism. Functionally, a cytochrome P450 monooxygenase involved in the metabolism of various endogenous substrates, including fatty acids, steroid hormones and vitamins. Mechanistically, uses molecular oxygen inserting one oxygen atom into a substrate, and reducing the second into a water molecule, with two electrons provided by NADPH via cytochrome P450 reductase (NADPH--hemoprotein reductase). Primarily catalyzes the epoxidation of double bonds of polyunsaturated fatty acids (PUFA) with a preference for the last double bond. Catalyzes the hydroxylation of carbon-hydrogen bonds. Metabolizes all trans-retinoic acid toward its 4-hydroxylated form. Displays 16-alpha hydroxylase activity toward estrogen steroid hormones, 17beta-estradiol (E2) and estrone (E1). Plays a role in the oxidative metabolism of xenobiotics. It is the principal enzyme responsible for the metabolism of the anti-cancer drug paclitaxel (taxol). The chain is Cytochrome P450 2C8 from Homo sapiens (Human).